A 523-amino-acid polypeptide reads, in one-letter code: ATP-dependent RNA helicase DBP3 (523 aa).

Residues Met-1–Lys-21 show a composition bias toward basic and acidic residues. Residues Met-1–Ala-71 form a disordered region. Over residues Lys-22–Glu-48 the composition is skewed to basic residues. Residues Lys-49–Glu-67 show a composition bias toward basic and acidic residues. Residues Leu-114–Ala-140 carry the Q motif motif. In terms of domain architecture, Helicase ATP-binding spans Trp-143 to Val-315. Ala-156 to Thr-163 serves as a coordination point for ATP. The DEAD box motif lies at Asp-262–Asp-265. The 150-residue stretch at Lys-344–Gly-493 folds into the Helicase C-terminal domain.

Belongs to the DEAD box helicase family. DDX5/DBP2 subfamily.

The protein localises to the nucleus. It is found in the nucleolus. It carries out the reaction ATP + H2O = ADP + phosphate + H(+). Its function is as follows. ATP-dependent RNA helicase required for 60S ribosomal subunit synthesis. Involved in efficient pre-rRNA processing, predominantly at site A3, which is necessary for the normal formation of 25S and 5.8S rRNAs. This is ATP-dependent RNA helicase DBP3 (DBP3) from Saccharomyces cerevisiae (strain ATCC 204508 / S288c) (Baker's yeast).